The sequence spans 139 residues: MKLISASLRRFSLAVLTILLVVSSFAVFTPSASAETYQVKLGTDKGLLAFEPKKLTIKPGDTIEWVNNKVPPHNVVFDPAKNPSKNADLAKSLSHKKLLMSAGQKETTTFAADAPAGDYTFYCEPHRGAGMVGTITVQG.

Positions 1 to 34 are cleaved as a signal peptide; the sequence is MKLISASLRRFSLAVLTILLVVSSFAVFTPSASA. The Plastocyanin-like domain occupies 35 to 139; that stretch reads ETYQVKLGTD…GMVGTITVQG (105 aa). Residues H73, C123, H126, and M131 each coordinate Cu cation.

The protein belongs to the plastocyanin family. The cofactor is Cu(2+).

The protein resides in the cellular thylakoid membrane. Functionally, participates in electron transfer between P700 and the cytochrome b6-f complex in photosystem I. The protein is Plastocyanin of Nostoc punctiforme (strain ATCC 29133 / PCC 73102).